Consider the following 416-residue polypeptide: Prostate tumor-overexpressed gene 1 protein homolog (416 aa).

A disordered region spans residues 1–53; sequence MVRPRRAPHRSGAGGPLGGRGRPPRPLVVRAVRSRSWPAGPRGPQPPRIRARS. The span at 12-21 shows a compositional bias: gly residues; sequence GAGGPLGGRG. Low complexity predominate over residues 27–36; the sequence is LVVRAVRSRS. At Ser-53 the chain carries Phosphoserine. Residues 184 to 416 are interaction with FLOT1; sequence NGFAGCMLFP…QEQQQRGMGG (233 aa).

The protein belongs to the Mediator complex subunit 25 family. PTOV1 subfamily. As to quaternary structure, may interact with CREBBP. Interacts with FLOT1. Post-translationally, ubiquitinated by the CRL2(KLHDC2) complex, which recognizes the diglycine (Gly-Gly) at the C-terminus, leading to its degradation. Ubiquitinated by the CRL2(APPBP2) complex, which recognizes the Arg-Xaa-Xaa-Gly sequence at the C-terminus, leading to its degradation.

The protein localises to the cytoplasm. The protein resides in the nucleus. Its subcellular location is the cell membrane. It is found in the perinuclear region. Functionally, may activate transcription. Required for nuclear translocation of FLOT1. Promotes cell proliferation. This is Prostate tumor-overexpressed gene 1 protein homolog (Ptov1) from Rattus norvegicus (Rat).